Here is an 83-residue protein sequence, read N- to C-terminus: Hainantoxin-III 6 (83 aa).

A signal peptide spans 1-21 (MKASMFLALAGLVLLFVVGYA). Positions 22 to 48 (SESEEKESPRELLSKIFAVDDFKGEER) are excised as a propeptide. Cystine bridges form between Cys-50–Cys-65, Cys-57–Cys-70, and Cys-64–Cys-77. At Leu-81 the chain carries Leucine amide.

This sequence belongs to the neurotoxin 10 (Hwtx-1) family. 15 (Hntx-3) subfamily. In terms of assembly, monomer. Expressed by the venom gland.

The protein resides in the secreted. Its function is as follows. Selective antagonist of neuronal tetrodotoxin (TTX)-sensitive voltage-gated sodium channels (IC(50)=1270 nM on Nav1.1/SCN1A, 270 nM on Nav1.2/SCN2A, 491 nM on Nav1.3/SCN3A and 232 nM on Nav1.7/SCN9A). This toxin suppress Nav1.7 current amplitude without significantly altering the activation, inactivation, and repriming kinetics. Short extreme depolarizations partially activate the toxin-bound channel, indicating voltage-dependent inhibition of this toxin. This toxin increases the deactivation of the Nav1.7 current after extreme depolarizations. The toxin-Nav1.7 complex is gradually dissociated upon prolonged strong depolarizations in a voltage-dependent manner, and the unbound toxin rebinds to Nav1.7 after a long repolarization. Moreover, analysis of chimeric channels showed that the DIIS3-S4 linker is critical for toxin binding to Nav1.7. These data are consistent with this toxin interacting with Nav1.7 site 4 and trapping the domain II voltage sensor in the closed state. The chain is Hainantoxin-III 6 from Cyriopagopus hainanus (Chinese bird spider).